We begin with the raw amino-acid sequence, 182 residues long: MAKRFLLLLPLLSSILLLAVSVTAYSTTTPYQGYKPEKFTHLHFYFHDVISGDKPTAVKVAEARPTTTLNVKFGVIMIADDPLTEGPDPSSKEVGRAQGMYASTAMKDIVFTMVFNYVFTAGEFNGSTIAVYGRNDIFSKVRELPIIGGTGAFRFARGYALPKTYKIVGLDAVVEYNVFIWH.

Positions 1–24 are cleaved as a signal peptide; that stretch reads MAKRFLLLLPLLSSILLLAVSVTA. N125 is a glycosylation site (N-linked (GlcNAc...) asparagine).

This sequence belongs to the plant dirigent protein family. As to quaternary structure, homodimer.

The protein localises to the secreted. It is found in the extracellular space. It localises to the apoplast. Its function is as follows. Dirigent proteins impart stereoselectivity on the phenoxy radical-coupling reaction, yielding optically active lignans from two molecules of coniferyl alcohol in the biosynthesis of lignans, flavonolignans, and alkaloids and thus plays a central role in plant secondary metabolism. The chain is Dirigent protein 1 (DIR1) from Arabidopsis thaliana (Mouse-ear cress).